The chain runs to 263 residues: MANTNYINRDETVFNDAQSLMQLNKNILLKGPTGSGKTKLAETLSETMNRPMHQINCSVDLDAESLLGFKTIQTNENGSQEIVFIDGPVIKAMKEGHILYIDEINMAKPETLPILNGVLDYRRKLTNPFTGEVVNAAPGFNVIAAINVGYIGTLPMNEALKNRFVVIQVDYIDGDILSDVIKQQSQLSDDIMIQKIIKFNEDLRTMTKQGQISEEAASIRALIDLSDLATIMPIERAIQRTIIDKLEDEREQQAILNAVELNF.

An ATP-binding site is contributed by 31-38 (GPTGSGKT).

Belongs to the CbbQ/NirQ/NorQ/GpvN family.

This is an uncharacterized protein from Staphylococcus saprophyticus subsp. saprophyticus (strain ATCC 15305 / DSM 20229 / NCIMB 8711 / NCTC 7292 / S-41).